Here is a 162-residue protein sequence, read N- to C-terminus: Ciliary microtubule inner protein 5 (162 aa).

A disordered region spans residues 1-44 (MGSHPTPGLQRTTSAGYRLPPTRPPASVSPAARGGPMASRGLAG).

Its subcellular location is the cell projection. It localises to the cilium. The sequence is that of Ciliary microtubule inner protein 5 from Homo sapiens (Human).